Reading from the N-terminus, the 297-residue chain is HTH-type transcriptional regulator ArgP (297 aa).

In terms of domain architecture, HTH lysR-type spans 4 to 60; the sequence is PDYRTLQALDAVIRERGFERAAQKLCITQSAVSQRIKQLENMFGQPLLVRTVPPRPT. The H-T-H motif DNA-binding region spans 21 to 40; sequence FERAAQKLCITQSAVSQRIK.

This sequence belongs to the LysR transcriptional regulatory family. In terms of assembly, homodimer.

Functionally, controls the transcription of genes involved in arginine and lysine metabolism. The sequence is that of HTH-type transcriptional regulator ArgP from Salmonella arizonae (strain ATCC BAA-731 / CDC346-86 / RSK2980).